The sequence spans 203 residues: Large ribosomal subunit protein bL25 (203 aa).

Belongs to the bacterial ribosomal protein bL25 family. CTC subfamily. Part of the 50S ribosomal subunit; part of the 5S rRNA/L5/L18/L25 subcomplex. Contacts the 5S rRNA. Binds to the 5S rRNA independently of L5 and L18.

This is one of the proteins that binds to the 5S RNA in the ribosome where it forms part of the central protuberance. This is Large ribosomal subunit protein bL25 from Cupriavidus metallidurans (strain ATCC 43123 / DSM 2839 / NBRC 102507 / CH34) (Ralstonia metallidurans).